Here is a 570-residue protein sequence, read N- to C-terminus: DNA polymerase/3'-5' exonuclease PolX (570 aa).

The interval 1 to 315 is DNA polymerase type-X; it reads MHKKDIIRLL…PLIPPEIRES (315 aa). A divalent metal cation is bound by residues Asp-193, Asp-195, and Asp-240. A 3'-5' exonuclease region spans residues 333-570; it reads QIKGDLHMHS…DVEAFLKRND (238 aa). Mn(2+)-binding residues include His-339, His-341, His-371, Glu-410, His-437, His-465, Asp-526, and His-528.

It in the N-terminal section; belongs to the DNA polymerase type-X family. In the C-terminal section; belongs to the PHP family. Monomer. Mn(2+) serves as cofactor. The cofactor is Mg(2+).

The enzyme catalyses DNA(n) + a 2'-deoxyribonucleoside 5'-triphosphate = DNA(n+1) + diphosphate. The catalysed reaction is Exonucleolytic cleavage in the 3'- to 5'-direction to yield nucleoside 5'-phosphates.. With respect to regulation, the polymerization activity is inhibited in the presence of 2'-3'-dideoxynucleoside 5'-triphosphate (ddNTP). Strictly DNA-template-directed DNA polymerase, preferentially acting on DNA structures containing gaps from one to a few nucleotides and bearing a phosphate group at the 5' end of the downstream DNA. The fact that PolX is able to conduct filling of a single-nucleotide gap, allowing further sealing of the resulting nick by a DNA ligase, points to a putative role in base excision repair (BER) during the B.subtilis life cycle. Moreover, also possesses a 3'-5' exonuclease activity able to edit unpaired 3'-termini in a gapped DNA substrate and likely involved in resecting unannealed 3'-termini during DNA repair. The same PolX molecule could perform the subsequent gap-filling step. Does not display 5'-deoxyribose 5'-phosphate (dRP) lyase activity, as predicted by the lack of the lysine and tyrosine residues responsible for the dRP lyase activity in some other PolX members. In Bacillus subtilis (strain 168), this protein is DNA polymerase/3'-5' exonuclease PolX (polX).